The primary structure comprises 100 residues: Aspartyl/glutamyl-tRNA(Asn/Gln) amidotransferase subunit C (100 aa).

This sequence belongs to the GatC family. As to quaternary structure, heterotrimer of A, B and C subunits.

It carries out the reaction L-glutamyl-tRNA(Gln) + L-glutamine + ATP + H2O = L-glutaminyl-tRNA(Gln) + L-glutamate + ADP + phosphate + H(+). The enzyme catalyses L-aspartyl-tRNA(Asn) + L-glutamine + ATP + H2O = L-asparaginyl-tRNA(Asn) + L-glutamate + ADP + phosphate + 2 H(+). Functionally, allows the formation of correctly charged Asn-tRNA(Asn) or Gln-tRNA(Gln) through the transamidation of misacylated Asp-tRNA(Asn) or Glu-tRNA(Gln) in organisms which lack either or both of asparaginyl-tRNA or glutaminyl-tRNA synthetases. The reaction takes place in the presence of glutamine and ATP through an activated phospho-Asp-tRNA(Asn) or phospho-Glu-tRNA(Gln). The polypeptide is Aspartyl/glutamyl-tRNA(Asn/Gln) amidotransferase subunit C (Herminiimonas arsenicoxydans).